The chain runs to 213 residues: ABA-inducible protein PHV A1 (213 aa).

Disordered regions lie at residues 1–158 and 182–213; these read MASN…KDKT and NTLG…TRNH. A compositionally biased stretch (basic and acidic residues) spans 13–23; the sequence is GETKARTEEKT. 9 LEA 11-mer repeat repeats span residues 27–37, 38–48, 49–59, 60–70, 78–88, 89–99, 111–121, 122–132, and 133–143; these read MGATKQKAGQT, TEATKQKAGET, AEATKQKTGET, AEAAKQKAAEA, AQAAKDKTYET, AQAAKERAAQG, TEAAKQKAAET, TEAAKQKAAEA, and TEAAKQKASDT. An 11 X 11 AA tandem repeats of T-E-A-A-K-Q-K-A-A-E-T region spans residues 27–143; that stretch reads MGATKQKAGQ…EAAKQKASDT (117 aa). Composition is skewed to basic and acidic residues over residues 41–74, 81–98, and 109–140; these read TKQK…KDKT, AKDK…RAAQ, and EKTE…KQKA. A compositionally biased stretch (low complexity) spans 193-213; it reads ATKDATTGATVKDTTTTTRNH.

This sequence belongs to the LEA type 4 family.

This is ABA-inducible protein PHV A1 (HVA1) from Hordeum vulgare (Barley).